We begin with the raw amino-acid sequence, 72 residues long: DNA-directed RNA polymerase subunit omega (72 aa).

It belongs to the RNA polymerase subunit omega family. In terms of assembly, the RNAP catalytic core consists of 2 alpha, 1 beta, 1 beta' and 1 omega subunit. When a sigma factor is associated with the core the holoenzyme is formed, which can initiate transcription.

It catalyses the reaction RNA(n) + a ribonucleoside 5'-triphosphate = RNA(n+1) + diphosphate. In terms of biological role, promotes RNA polymerase assembly. Latches the N- and C-terminal regions of the beta' subunit thereby facilitating its interaction with the beta and alpha subunits. The chain is DNA-directed RNA polymerase subunit omega from Campylobacter lari (strain RM2100 / D67 / ATCC BAA-1060).